We begin with the raw amino-acid sequence, 448 residues long: Bifunctional protein GlmU (448 aa).

A pyrophosphorylase region spans residues 1-232; the sequence is MTARSSLTIV…EDEVRGINTK (232 aa). UDP-N-acetyl-alpha-D-glucosamine contacts are provided by residues 11–14, Lys25, Gln78, and 83–84; these read LAAG and GT. Residue Asp108 coordinates Mg(2+). Residues Gly144, Glu158, Asn173, and Asn230 each coordinate UDP-N-acetyl-alpha-D-glucosamine. Asn230 contacts Mg(2+). Residues 233–253 are linker; that stretch reads AQLAQAEAAMQARLRQAAMDA. The N-acetyltransferase stretch occupies residues 254–448; it reads GVTLIAPETV…FRNAKLRQTK (195 aa). The UDP-N-acetyl-alpha-D-glucosamine site is built by Arg319 and Lys337. His349 (proton acceptor) is an active-site residue. Tyr352 and Asn363 together coordinate UDP-N-acetyl-alpha-D-glucosamine. Acetyl-CoA-binding positions include Ala366, 372–373, Ser409, and Arg426; that span reads NY. The tract at residues 427-448 is disordered; sequence SPQTTKEGAAARFRNAKLRQTK.

This sequence in the N-terminal section; belongs to the N-acetylglucosamine-1-phosphate uridyltransferase family. In the C-terminal section; belongs to the transferase hexapeptide repeat family. In terms of assembly, homotrimer. Mg(2+) is required as a cofactor.

It is found in the cytoplasm. The catalysed reaction is alpha-D-glucosamine 1-phosphate + acetyl-CoA = N-acetyl-alpha-D-glucosamine 1-phosphate + CoA + H(+). It catalyses the reaction N-acetyl-alpha-D-glucosamine 1-phosphate + UTP + H(+) = UDP-N-acetyl-alpha-D-glucosamine + diphosphate. Its pathway is nucleotide-sugar biosynthesis; UDP-N-acetyl-alpha-D-glucosamine biosynthesis; N-acetyl-alpha-D-glucosamine 1-phosphate from alpha-D-glucosamine 6-phosphate (route II): step 2/2. It functions in the pathway nucleotide-sugar biosynthesis; UDP-N-acetyl-alpha-D-glucosamine biosynthesis; UDP-N-acetyl-alpha-D-glucosamine from N-acetyl-alpha-D-glucosamine 1-phosphate: step 1/1. It participates in bacterial outer membrane biogenesis; LPS lipid A biosynthesis. Functionally, catalyzes the last two sequential reactions in the de novo biosynthetic pathway for UDP-N-acetylglucosamine (UDP-GlcNAc). The C-terminal domain catalyzes the transfer of acetyl group from acetyl coenzyme A to glucosamine-1-phosphate (GlcN-1-P) to produce N-acetylglucosamine-1-phosphate (GlcNAc-1-P), which is converted into UDP-GlcNAc by the transfer of uridine 5-monophosphate (from uridine 5-triphosphate), a reaction catalyzed by the N-terminal domain. The sequence is that of Bifunctional protein GlmU from Bradyrhizobium sp. (strain ORS 278).